Reading from the N-terminus, the 66-residue chain is Large ribosomal subunit protein bL33c (66 aa).

This sequence belongs to the bacterial ribosomal protein bL33 family.

Its subcellular location is the plastid. The protein resides in the chloroplast. This is Large ribosomal subunit protein bL33c from Helianthus annuus (Common sunflower).